Consider the following 224-residue polypeptide: Ribonuclease HII (224 aa).

Residues 7-217 enclose the RNase H type-2 domain; the sequence is STIMGIDEAG…SNAVIADCLQ (211 aa). A divalent metal cation is bound by residues Asp13, Glu14, and Asp111.

It belongs to the RNase HII family. Requires Mn(2+) as cofactor. The cofactor is Mg(2+).

It is found in the cytoplasm. The enzyme catalyses Endonucleolytic cleavage to 5'-phosphomonoester.. Functionally, endonuclease that specifically degrades the RNA of RNA-DNA hybrids. The chain is Ribonuclease HII from Methanocella arvoryzae (strain DSM 22066 / NBRC 105507 / MRE50).